The primary structure comprises 1038 residues: DNA polymerase delta catalytic subunit (1038 aa).

The interval 1–29 (MSHSIPITSSPPPALKKLKLPNGSEEPSE) is disordered. C942, C945, C958, and C961 together coordinate Zn(2+). Residues 942–961 (CVSCRTPLKKDNLGALCPNC) form a CysA-type zinc finger. [4Fe-4S] cluster is bound by residues C992, C995, C1005, and C1010. Residues 992–1010 (CQRCQGSLHQEVLCSNKDC) carry the CysB motif motif.

The protein belongs to the DNA polymerase type-B family. As to quaternary structure, heterodimer with subunits of 125 kDa and 50 kDa. The 125 kDa subunit contains the polymerase active site and most likely the active site for the 3'-5' exonuclease activity. Requires [4Fe-4S] cluster as cofactor.

Its subcellular location is the nucleus. It carries out the reaction DNA(n) + a 2'-deoxyribonucleoside 5'-triphosphate = DNA(n+1) + diphosphate. In terms of biological role, this polymerase possesses two enzymatic activities: DNA synthesis (polymerase) and an exonucleolytic activity that degrades single-stranded DNA in the 3'- to 5'-direction. This Candida albicans (Yeast) protein is DNA polymerase delta catalytic subunit (POL3).